The following is a 189-amino-acid chain: MVKFIDAKIDNFAKQLQQRNNLDRIEYLKMRLGMQVVVNNFFKTIVIYGVSLLCHMFLYTLTVHLTFFFIRHFAHGAHAKNSLLCYIQSVIYFVLLPWIVGYVQVSSLIMYTLALVGLIIISIYAPSATKKQPIPERLRRGKKIKAICLTLIFLLISLFLNEPYQQLMLLGIVIISILQFPIFFPKEDY.

A run of 5 helical transmembrane segments spans residues 50-70 (VSLLCHMFLYTLTVHLTFFFI), 83-103 (LLCYIQSVIYFVLLPWIVGYV), 105-125 (VSSLIMYTLALVGLIIISIYA), 143-163 (KIKAICLTLIFLLISLFLNEP), and 164-184 (YQQLMLLGIVIISILQFPIFF).

It belongs to the AgrB family.

The protein localises to the cell membrane. In terms of biological role, essential for the production of a quorum sensing system signal molecule, the autoinducing peptide (AIP). This quorum sensing system is responsible for the regulation of the expression of virulence factor genes. Involved in the proteolytic processing of AgrD, the precursor of AIP. The polypeptide is Accessory gene regulator protein B (Staphylococcus saprophyticus subsp. saprophyticus (strain ATCC 15305 / DSM 20229 / NCIMB 8711 / NCTC 7292 / S-41)).